We begin with the raw amino-acid sequence, 304 residues long: Homoserine O-acetyltransferase (304 aa).

Cys-142 functions as the Acyl-thioester intermediate in the catalytic mechanism. Positions 163 and 191 each coordinate substrate. His-234 acts as the Proton acceptor in catalysis. Residue Glu-236 is part of the active site. Residue Arg-248 coordinates substrate.

This sequence belongs to the MetA family.

It is found in the cytoplasm. It catalyses the reaction L-homoserine + acetyl-CoA = O-acetyl-L-homoserine + CoA. The protein operates within amino-acid biosynthesis; L-methionine biosynthesis via de novo pathway; O-acetyl-L-homoserine from L-homoserine: step 1/1. In terms of biological role, transfers an acetyl group from acetyl-CoA to L-homoserine, forming acetyl-L-homoserine. The chain is Homoserine O-acetyltransferase from Thermotoga petrophila (strain ATCC BAA-488 / DSM 13995 / JCM 10881 / RKU-1).